The following is a 240-amino-acid chain: Putative glycyl-radical enzyme activating enzyme MJ1227 (240 aa).

The 219-residue stretch at 14–232 (IDYPKKASAV…KKYIDNVVIR (219 aa)) folds into the Radical SAM core domain. Positions 29, 33, and 36 each coordinate [4Fe-4S] cluster. Residues 35-37 (YCH), Gly-71, and 126-128 (FDK) each bind S-adenosyl-L-methionine.

Belongs to the organic radical-activating enzymes family. It depends on [4Fe-4S] cluster as a cofactor.

The enzyme catalyses glycyl-[protein] + reduced [flavodoxin] + S-adenosyl-L-methionine = glycin-2-yl radical-[protein] + semiquinone [flavodoxin] + 5'-deoxyadenosine + L-methionine + H(+). The protein is Putative glycyl-radical enzyme activating enzyme MJ1227 of Methanocaldococcus jannaschii (strain ATCC 43067 / DSM 2661 / JAL-1 / JCM 10045 / NBRC 100440) (Methanococcus jannaschii).